The primary structure comprises 418 residues: Protease LasA (418 aa).

An N-terminal signal peptide occupies residues 1 to 31 (MQHKRSRAMASPRSPFLFVLLALAVGGTANA). The propeptide occupies 32–236 (HDDGLPAFRY…ARQLQAKAAL (205 aa)). Residues H259 and D272 each contribute to the Zn(2+) site. C301 and C347 are oxidised to a cystine. Residues H317 and H356 each act as proton donor/acceptor in the active site. Zn(2+) is bound at residue H358. Cysteines 391 and 406 form a disulfide.

It belongs to the peptidase M23A family. Zn(2+) is required as a cofactor. Post-translationally, processing of pro-LasA can occur extracellularly and requires elastase (lasB). Secretion and processing may be linked.

Its subcellular location is the secreted. Involved in proteolysis and elastolysis (degradation of the host protein elastin). Has staphylolytic activity (degrades pentaglycine cross-links in cell wall peptidoglycan), preferring Gly-Gly-|-X substrates where X is Ala or Gly. Enhances the elastolytic but not proteolytic activity of elastase (lasB) and elastolytic activity of other proteases. Degradation of host elastin is likely to contribute to the pathogenicity of P.aeruginosa. While either His-317 or His-356 can abstract a proton in the hydrolysis reaction, the same residue performs both functions in a given catalytic cycle, with the other stabilizing the catalytic intermediate. The protein is Protease LasA (lasA) of Pseudomonas aeruginosa (strain ATCC 15692 / DSM 22644 / CIP 104116 / JCM 14847 / LMG 12228 / 1C / PRS 101 / PAO1).